A 93-amino-acid polypeptide reads, in one-letter code: Large ribosomal subunit protein uL23 (93 aa).

The protein belongs to the universal ribosomal protein uL23 family. Part of the 50S ribosomal subunit. Contacts protein L29, and trigger factor when it is bound to the ribosome.

Its function is as follows. One of the early assembly proteins it binds 23S rRNA. One of the proteins that surrounds the polypeptide exit tunnel on the outside of the ribosome. Forms the main docking site for trigger factor binding to the ribosome. The chain is Large ribosomal subunit protein uL23 from Sulfurovum sp. (strain NBC37-1).